A 378-amino-acid polypeptide reads, in one-letter code: Probable tRNA sulfurtransferase (378 aa).

A THUMP domain is found at 51 to 153 (DANLEKLQYV…SDKTYLFSKT (103 aa)). Residues 171 to 172 (LM), 196 to 197 (SF), R253, G275, and Q284 contribute to the ATP site.

This sequence belongs to the ThiI family.

It localises to the cytoplasm. The catalysed reaction is [ThiI sulfur-carrier protein]-S-sulfanyl-L-cysteine + a uridine in tRNA + 2 reduced [2Fe-2S]-[ferredoxin] + ATP + H(+) = [ThiI sulfur-carrier protein]-L-cysteine + a 4-thiouridine in tRNA + 2 oxidized [2Fe-2S]-[ferredoxin] + AMP + diphosphate. It catalyses the reaction [ThiS sulfur-carrier protein]-C-terminal Gly-Gly-AMP + S-sulfanyl-L-cysteinyl-[cysteine desulfurase] + AH2 = [ThiS sulfur-carrier protein]-C-terminal-Gly-aminoethanethioate + L-cysteinyl-[cysteine desulfurase] + A + AMP + 2 H(+). Its pathway is cofactor biosynthesis; thiamine diphosphate biosynthesis. In terms of biological role, catalyzes the ATP-dependent transfer of a sulfur to tRNA to produce 4-thiouridine in position 8 of tRNAs, which functions as a near-UV photosensor. Also catalyzes the transfer of sulfur to the sulfur carrier protein ThiS, forming ThiS-thiocarboxylate. This is a step in the synthesis of thiazole, in the thiamine biosynthesis pathway. The sulfur is donated as persulfide by IscS. This is Probable tRNA sulfurtransferase from Mycoplasmopsis agalactiae (strain NCTC 10123 / CIP 59.7 / PG2) (Mycoplasma agalactiae).